The primary structure comprises 430 residues: Keratin, type I cytoskeletal 18 (430 aa).

Position 2 is an N-acetylserine (Ser2). Residues 2 to 79 (SFTTRSTFST…GLAGMGGIQN (78 aa)) are head. Phosphoserine occurs at positions 7, 10, 15, and 18. Phosphoserine; alternate occurs at positions 30 and 31. 2 O-linked (GlcNAc) serine; alternate glycosylation sites follow: Ser30 and Ser31. Ser34 bears the Phosphoserine; by CDK1 mark. Tyr36 is modified (phosphotyrosine). Position 42 is a phosphoserine (Ser42). Arg45 carries the post-translational modification Omega-N-methylarginine. At Ser49 the chain carries Phosphoserine; alternate. Ser49 carries an O-linked (GlcNAc) serine; alternate glycan. Ser51 carries the phosphoserine; by MAPKAPK2 and MAPKAPK3 modification. A Phosphothreonine modification is found at Thr52. Ser53 is subject to Phosphoserine; by CAMK, PKC/PRKCE and AURKA. Arg55 bears the Omega-N-methylarginine mark. Ser60 is modified (phosphoserine). Thr65 bears the Phosphothreonine mark. Residues 70 to 373 (GLAGMGGIQN…EALLNIKVKL (304 aa)) form a necessary for interaction with PNN region. Positions 77-128 (IQNEKETMQSLNDRLASYLDRVRSLETENRRLESKIREHLEKKGPQVRDWSH) are interaction with TRADD. A coil 1A region spans residues 80-115 (EKETMQSLNDRLASYLDRVRSLETENRRLESKIREH). The region spanning 80-391 (EKETMQSLND…RLLEDGEDFN (312 aa)) is the IF rod domain. Lys81 is covalently cross-linked (Glycyl lysine isopeptide (Lys-Gly) (interchain with G-Cter in SUMO2)). Phosphoserine is present on residues Ser93 and Ser100. The linker 1 stretch occupies residues 116–132 (LEKKGPQVRDWSHYFKI). The residue at position 131 (Lys131) is an N6-acetyllysine. The tract at residues 133 to 224 (IEDLRAQIFA…KNHEEEVKGL (92 aa)) is coil 1B. A Phosphoserine modification is found at Ser177. The linker 12 stretch occupies residues 225–248 (QAQIASSGLTVEVDAPKSQDLAKI). An interaction with DNAJB6 region spans residues 243 to 391 (QDLAKIMADI…RLLEDGEDFN (149 aa)). Residue Lys247 forms a Glycyl lysine isopeptide (Lys-Gly) (interchain with G-Cter in SUMO2) linkage. The tract at residues 249-387 (MADIRAQYDE…ATYRRLLEDG (139 aa)) is coil 2. Thr302 is modified (phosphothreonine). Ser305, Ser319, and Ser323 each carry phosphoserine. Glycyl lysine isopeptide (Lys-Gly) (interchain with G-Cter in SUMO2) cross-links involve residues Lys370 and Lys372. The tract at residues 388 to 430 (EDFNLGDALDSSNSMQTIQKTTTRRIVDGKVVSETNDTKVLRH) is tail. Ser398, Ser399, and Ser401 each carry phosphoserine. Position 404 is a phosphothreonine (Thr404). A Glycyl lysine isopeptide (Lys-Gly) (interchain with G-Cter in SUMO2) cross-link involves residue Lys417. At Lys426 the chain carries N6-acetyllysine; alternate. Lys426 is covalently cross-linked (Glycyl lysine isopeptide (Lys-Gly) (interchain with G-Cter in SUMO1); alternate). Lys426 is covalently cross-linked (Glycyl lysine isopeptide (Lys-Gly) (interchain with G-Cter in SUMO2); alternate).

Belongs to the intermediate filament family. Heterotetramer of two type I and two type II keratins. KRT18 associates with KRT8. Interacts with PLEC isoform 1C, when in a heterodimer with KRT8. Interacts with the thrombin-antithrombin complex. Interacts with PNN and mutated CFTR. Interacts with YWHAE, YWHAH and YWHAZ only when phosphorylated. Interacts with DNAJB6, TCHP and TRADD. Interacts with FAM83H. Interacts with EPPK1. Interacts with PKP1 and PKP2. In terms of assembly, (Microbial infection) Interacts with hepatitis C virus/HCV core protein. Post-translationally, phosphorylation at Ser-34 increases during mitosis. Hyperphosphorylated at Ser-53 in diseased cirrhosis liver. Phosphorylation increases by IL-6. Proteolytically cleaved by caspases during epithelial cell apoptosis. Cleavage occurs at Asp-238 by either caspase-3, caspase-6 or caspase-7. In terms of processing, O-GlcNAcylation increases solubility, and decreases stability by inducing proteasomal degradation. In terms of tissue distribution, expressed in colon, placenta, liver and very weakly in exocervix. Increased expression observed in lymph nodes of breast carcinoma.

The protein localises to the nucleus matrix. It is found in the cytoplasm. Its subcellular location is the perinuclear region. It localises to the nucleus. The protein resides in the nucleolus. Functionally, involved in the uptake of thrombin-antithrombin complexes by hepatic cells. When phosphorylated, plays a role in filament reorganization. Involved in the delivery of mutated CFTR to the plasma membrane. Together with KRT8, is involved in interleukin-6 (IL-6)-mediated barrier protection. This Homo sapiens (Human) protein is Keratin, type I cytoskeletal 18 (KRT18).